Here is a 512-residue protein sequence, read N- to C-terminus: Ribose import ATP-binding protein RbsA 2 (512 aa).

ABC transporter domains are found at residues 22 to 258 (LEMR…VGRD) and 263 to 512 (FPKV…TGNA). Residue 54–61 (GENGAGKS) participates in ATP binding.

The protein belongs to the ABC transporter superfamily. Ribose importer (TC 3.A.1.2.1) family. In terms of assembly, the complex is composed of an ATP-binding protein (RbsA), two transmembrane proteins (RbsC) and a solute-binding protein (RbsB).

The protein resides in the cell inner membrane. The catalysed reaction is D-ribose(out) + ATP + H2O = D-ribose(in) + ADP + phosphate + H(+). In terms of biological role, part of the ABC transporter complex RbsABC involved in ribose import. Responsible for energy coupling to the transport system. The chain is Ribose import ATP-binding protein RbsA 2 from Rhizobium johnstonii (strain DSM 114642 / LMG 32736 / 3841) (Rhizobium leguminosarum bv. viciae).